Reading from the N-terminus, the 907-residue chain is Envelope glycoprotein B (907 aa).

The first 22 residues, 1 to 22 (MESRIWCLVVCVNLCIVCLGAA), serve as a signal peptide directing secretion. Residues 23-751 (VSSSSTRGTS…EGVATFLKNP (729 aa)) are Virion surface-facing. A disordered region spans residues 29 to 62 (RGTSATHSHHSSHTTSAAHSRSGSVSQRVTSSQT). Residues 41–62 (HTTSAAHSRSGSVSQRVTSSQT) show a composition bias toward low complexity. 3 N-linked (GlcNAc...) asparagine; by host glycosylation sites follow: Asn-68, Asn-73, and Asn-85. Disulfide bonds link Cys-94–Cys-551, Cys-111–Cys-507, Cys-185–Cys-250, and Cys-344–Cys-391. The segment at 152–158 (SYAYIHT) is involved in fusion and/or binding to host membrane. The N-linked (GlcNAc...) asparagine; by host glycan is linked to Asn-208. Positions 237–244 (GSTWLYRE) are involved in fusion and/or binding to host membrane. N-linked (GlcNAc...) asparagine; by host glycosylation is found at Asn-281, Asn-286, Asn-302, Asn-341, Asn-383, Asn-405, Asn-409, Asn-417, Asn-447, Asn-452, Asn-456, Asn-466, Asn-555, and Asn-586. Cys-574 and Cys-611 are disulfide-bonded. 2 hydrophobic membrane proximal region regions span residues 697-749 (VEDK…TFLK) and 708-748 (YLKG…ATFL). Residues 752-772 (FGAFTIILVAIAVVIIIYLIY) traverse the membrane as a helical segment. Residues 773-907 (TRQRRLCMQP…LKDSDEEENV (135 aa)) are Intravirion-facing. 2 stretches are compositionally biased toward polar residues: residues 798–810 (VTSG…SLQA) and 860–877 (RAQQ…GTQD). Disordered regions lie at residues 798-838 (VTSG…TAAP) and 860-907 (RAQQ…EENV). Basic and acidic residues predominate over residues 878–887 (KGQKPNLLDR). An Internalization motif motif is present at residues 895–898 (YRHL).

It belongs to the herpesviridae glycoprotein B family. As to quaternary structure, homotrimer; disulfide-linked. Binds to heparan sulfate proteoglycans. Interacts with gH/gL heterodimer. Interacts with host C-type lectin CD209/DC-SIGN. Interacts with host ITGB1, EGFR, and PDGFRA. Post-translationally, a proteolytic cleavage by host furin generates two subunits that remain linked by disulfide bonds.

The protein localises to the virion membrane. The protein resides in the host cell membrane. Its subcellular location is the host endosome membrane. It is found in the host Golgi apparatus membrane. Its function is as follows. Envelope glycoprotein that plays a role in host cell entry, cell to-cell virus transmission, and fusion of infected cells. May be involved in the initial attachment via binding to heparan sulfate together with the gM/gN complex that binds heparin with higher affinity. Interacts with host integrin ITGB1, PDGFRA and EGFR that likely serve as postattachment entry receptors. Also participates in the fusion of viral and cellular membranes leading to virus entry into the host cell. Membrane fusion is mediated by the fusion machinery composed at least of gB and the heterodimer gH/gL. The chain is Envelope glycoprotein B from Homo sapiens (Human).